Consider the following 82-residue polypeptide: MAHKKGQGASRNGRDSESKRLGMKVGAGQRVSTGSILVRQRGTKWHPSQNVGRGRDDTLFALVDGIVVTKKTDRTYISVLPE.

A disordered region spans residues 1–54 (MAHKKGQGASRNGRDSESKRLGMKVGAGQRVSTGSILVRQRGTKWHPSQNVGRG).

Belongs to the bacterial ribosomal protein bL27 family.

This chain is Large ribosomal subunit protein bL27, found in Chlamydia caviae (strain ATCC VR-813 / DSM 19441 / 03DC25 / GPIC) (Chlamydophila caviae).